The chain runs to 185 residues: ATP synthase subunit delta, chloroplastic (185 aa).

The protein belongs to the ATPase delta chain family. F-type ATPases have 2 components, F(1) - the catalytic core - and F(0) - the membrane proton channel. F(1) has five subunits: alpha(3), beta(3), gamma(1), delta(1), epsilon(1). CF(0) has four main subunits: a(1), b(1), b'(1) and c(10-14). The alpha and beta chains form an alternating ring which encloses part of the gamma chain. F(1) is attached to F(0) by a central stalk formed by the gamma and epsilon chains, while a peripheral stalk is formed by the delta, b and b' chains.

Its subcellular location is the plastid. It is found in the chloroplast thylakoid membrane. Its function is as follows. F(1)F(0) ATP synthase produces ATP from ADP in the presence of a proton or sodium gradient. F-type ATPases consist of two structural domains, F(1) containing the extramembraneous catalytic core and F(0) containing the membrane proton channel, linked together by a central stalk and a peripheral stalk. During catalysis, ATP synthesis in the catalytic domain of F(1) is coupled via a rotary mechanism of the central stalk subunits to proton translocation. In terms of biological role, this protein is part of the stalk that links CF(0) to CF(1). It either transmits conformational changes from CF(0) to CF(1) or is implicated in proton conduction. The chain is ATP synthase subunit delta, chloroplastic from Guillardia theta (Cryptophyte).